The following is a 286-amino-acid chain: MANLKEIRNRITSVSSTMQITSAMKMVSAAKLKKAQDAITAMRPYAEKLTELLQNLSATLEGEVGGAYTTQREVKKVLLVAITSNRGLCGAFNSNVIKEIKNRTDFYAGKQVDVFAIGKKGNDVLSKTHKVHGHHNAIFDHLTFENVAGIADNLTEKFLSGEYDKIELIYNQFKNAATQIVQTEQFLPLAPLKSEVSASAGDYIFEPSKEEIVLTLIPKSLKTQLYKGIRDSFASEHGARMTAMHKATDNATELRNQLKLTYNKARQAAITNEILEIVGGAEALNG.

The protein belongs to the ATPase gamma chain family. In terms of assembly, F-type ATPases have 2 components, CF(1) - the catalytic core - and CF(0) - the membrane proton channel. CF(1) has five subunits: alpha(3), beta(3), gamma(1), delta(1), epsilon(1). CF(0) has three main subunits: a, b and c.

Its subcellular location is the cell inner membrane. In terms of biological role, produces ATP from ADP in the presence of a proton gradient across the membrane. The gamma chain is believed to be important in regulating ATPase activity and the flow of protons through the CF(0) complex. This Flavobacterium johnsoniae (strain ATCC 17061 / DSM 2064 / JCM 8514 / BCRC 14874 / CCUG 350202 / NBRC 14942 / NCIMB 11054 / UW101) (Cytophaga johnsonae) protein is ATP synthase gamma chain.